A 191-amino-acid chain; its full sequence is Peptidyl-tRNA hydrolase (191 aa).

A tRNA-binding site is contributed by Y14. H19 acts as the Proton acceptor in catalysis. TRNA-binding residues include Y64, N66, and N112.

The protein belongs to the PTH family. As to quaternary structure, monomer.

It localises to the cytoplasm. It catalyses the reaction an N-acyl-L-alpha-aminoacyl-tRNA + H2O = an N-acyl-L-amino acid + a tRNA + H(+). Functionally, hydrolyzes ribosome-free peptidyl-tRNAs (with 1 or more amino acids incorporated), which drop off the ribosome during protein synthesis, or as a result of ribosome stalling. Its function is as follows. Catalyzes the release of premature peptidyl moieties from peptidyl-tRNA molecules trapped in stalled 50S ribosomal subunits, and thus maintains levels of free tRNAs and 50S ribosomes. The sequence is that of Peptidyl-tRNA hydrolase from Clostridium beijerinckii (strain ATCC 51743 / NCIMB 8052) (Clostridium acetobutylicum).